A 371-amino-acid polypeptide reads, in one-letter code: tRNA-specific 2-thiouridylase MnmA (371 aa).

ATP-binding positions include 13 to 20 (GMSGGVDS) and methionine 39. The tract at residues 99 to 101 (NPD) is interaction with target base in tRNA. Cysteine 104 acts as the Nucleophile in catalysis. The cysteines at positions 104 and 200 are disulfide-linked. Glycine 128 serves as a coordination point for ATP. Residues 150–152 (KDQ) are interaction with tRNA. Residue cysteine 200 is the Cysteine persulfide intermediate of the active site. The interval 308–309 (RY) is interaction with tRNA.

It belongs to the MnmA/TRMU family.

Its subcellular location is the cytoplasm. The enzyme catalyses S-sulfanyl-L-cysteinyl-[protein] + uridine(34) in tRNA + AH2 + ATP = 2-thiouridine(34) in tRNA + L-cysteinyl-[protein] + A + AMP + diphosphate + H(+). Functionally, catalyzes the 2-thiolation of uridine at the wobble position (U34) of tRNA, leading to the formation of s(2)U34. The chain is tRNA-specific 2-thiouridylase MnmA from Bacillus mycoides (strain KBAB4) (Bacillus weihenstephanensis).